The sequence spans 47 residues: Defensin-like protein 1 (47 aa).

4 cysteine pairs are disulfide-bonded: C3-C47, C14-C34, C20-C41, and C24-C43.

Monomer and homodimer.

Functionally, inhibits trypsin but not chymotrypsin. This Vigna unguiculata (Cowpea) protein is Defensin-like protein 1.